Consider the following 543-residue polypeptide: Carboxypeptidase Y homolog A (543 aa).

A signal peptide spans 1–17 (MRVLPATLLVGAATAAA). Residues 18 to 124 (PPFQQILGLP…KLEAYDLRVK (107 aa)) constitute a propeptide that is removed on maturation. Cystine bridges form between Cys-179/Cys-419, Cys-313/Cys-327, Cys-337/Cys-360, Cys-344/Cys-353, and Cys-382/Cys-389. N-linked (GlcNAc...) asparagine glycosylation is present at Asn-210. Ser-266 is a catalytic residue. Asp-458 is an active-site residue. The N-linked (GlcNAc...) asparagine glycan is linked to Asn-509. His-520 is an active-site residue.

The protein belongs to the peptidase S10 family.

The protein localises to the vacuole. It catalyses the reaction Release of a C-terminal amino acid with broad specificity.. Its function is as follows. Vacuolar carboxypeptidase involved in degradation of small peptides. Digests preferentially peptides containing an aliphatic or hydrophobic residue in P1' position, as well as methionine, leucine or phenylalanine in P1 position of ester substrate. The protein is Carboxypeptidase Y homolog A (cpyA) of Neosartorya fischeri (strain ATCC 1020 / DSM 3700 / CBS 544.65 / FGSC A1164 / JCM 1740 / NRRL 181 / WB 181) (Aspergillus fischerianus).